Reading from the N-terminus, the 2323-residue chain is C2 domain-containing protein 3 (2323 aa).

6 disordered regions span residues Met-1–Thr-27, Arg-193–Gly-215, Trp-402–Asp-426, Ser-444–Ala-509, Pro-537–Pro-556, and Lys-698–Thr-745. The span at Glu-200–Pro-209 shows a compositional bias: polar residues. At Ser-453 the chain carries Phosphoserine. The span at Lys-474 to Gln-483 shows a compositional bias: basic and acidic residues. Residues Pro-504 to Ser-663 form the C2 1 domain. Over residues Lys-698–Asn-735 the composition is skewed to polar residues. Ser-713 carries the post-translational modification Phosphoserine. C2 domains are found at residues Ser-771–Leu-903, Gln-969–Asp-1131, Ser-1155–Tyr-1323, and Lys-1383–Ile-1517. Basic and acidic residues predominate over residues Glu-1550–Asp-1574. Disordered stretches follow at residues Glu-1550–Ala-1599 and Leu-1798–His-1824. The segment covering Leu-1584–Ala-1599 has biased composition (polar residues). The C2 6 domain maps to Ala-1598–Tyr-1726. Position 1871 is a phosphoserine (Ser-1871). Disordered stretches follow at residues Phe-1891 to Asp-1918, Ala-1952 to Leu-2013, Ser-2074 to Trp-2163, Ser-2182 to Thr-2231, and Ser-2261 to Thr-2323. Residues Ser-1892–Glu-1904 are compositionally biased toward low complexity. Composition is skewed to polar residues over residues Ala-1952–Val-1965 and Ser-2074–Glu-2083. The segment covering Ala-2110–Val-2125 has biased composition (low complexity). Positions Pro-2147–Ser-2158 are enriched in polar residues. Residues Ser-2182–Glu-2197 are compositionally biased toward low complexity. A compositionally biased stretch (basic and acidic residues) spans Ser-2207–Pro-2216. Polar residues predominate over residues Gln-2222–Thr-2231.

As to quaternary structure, interacts with OFD1; OFD1 may act as a negative regulator of C2CD3. Associates with the BBSome complex. Interacts with IFT88, BBS4 and PCM1.

The protein localises to the cytoplasm. Its subcellular location is the cytoskeleton. It is found in the cilium basal body. The protein resides in the microtubule organizing center. It localises to the centrosome. The protein localises to the centriole. In terms of biological role, component of the centrioles that acts as a positive regulator of centriole elongation. Promotes assembly of centriolar distal appendage, a structure at the distal end of the mother centriole that acts as an anchor of the cilium, and is required for recruitment of centriolar distal appendages proteins CEP83, SCLT1, CEP89, FBF1 and CEP164. Not required for centriolar satellite integrity or RAB8 activation. Required for primary cilium formation. Required for sonic hedgehog/SHH signaling and for proteolytic processing of GLI3. In Mus musculus (Mouse), this protein is C2 domain-containing protein 3 (C2cd3).